The chain runs to 321 residues: Tet-like dioxygenase 1 (321 aa).

Residues 198-298 form the Fe2OG dioxygenase domain; it reads DSYYALNNCL…RIGLVYFAHK (101 aa). 2-oxoglutarate is bound by residues N214 and R224. Fe cation contacts are provided by H229 and D231. Y242 is a binding site for 2-oxoglutarate. Residue H279 participates in Fe cation binding. R289 contributes to the 2-oxoglutarate binding site. A substrate-binding site is contributed by Q310.

The cofactor is Fe(2+).

It carries out the reaction a 5-methyl-2'-deoxycytidine in DNA + 2-oxoglutarate + O2 = a 5-hydroxymethyl-2'-deoxycytidine in DNA + succinate + CO2. The catalysed reaction is a 5-hydroxymethyl-2'-deoxycytidine in DNA + 2-oxoglutarate + O2 = a 5-formyl-2'-deoxycytidine in DNA + succinate + CO2 + H2O. It catalyses the reaction a 5-formyl-2'-deoxycytidine in DNA + 2-oxoglutarate + O2 = a 5-carboxyl-2'-deoxycytidine in DNA + succinate + CO2 + H(+). Functionally, dioxygenase that catalyzes the conversion of the modified genomic base 5-methylcytosine (5mC) into 5-hydroxymethylcytosine (5hmC), and thereby plays a role in active DNA demethylation. Also mediates subsequent conversion of 5hmC into 5-formylcytosine (5fC), and conversion of 5fC to 5-carboxylcytosine (5caC). This is Tet-like dioxygenase 1 from Naegleria gruberi (Amoeba).